Consider the following 312-residue polypeptide: Beta-ketoacyl-[acyl-carrier-protein] synthase III (312 aa).

Residues Cys112 and His237 contribute to the active site. The interval 238–242 (QANIR) is ACP-binding. Asn267 is an active-site residue.

Belongs to the thiolase-like superfamily. FabH family. In terms of assembly, homodimer.

It is found in the cytoplasm. It catalyses the reaction malonyl-[ACP] + acetyl-CoA + H(+) = 3-oxobutanoyl-[ACP] + CO2 + CoA. Its pathway is lipid metabolism; fatty acid biosynthesis. Its function is as follows. Catalyzes the condensation reaction of fatty acid synthesis by the addition to an acyl acceptor of two carbons from malonyl-ACP. Catalyzes the first condensation reaction which initiates fatty acid synthesis and may therefore play a role in governing the total rate of fatty acid production. Possesses both acetoacetyl-ACP synthase and acetyl transacylase activities. Its substrate specificity determines the biosynthesis of branched-chain and/or straight-chain of fatty acids. The sequence is that of Beta-ketoacyl-[acyl-carrier-protein] synthase III from Bacillus pumilus (strain SAFR-032).